A 129-amino-acid chain; its full sequence is MAEEKWGIAHIFASFNNTIITVTDLSGAETVTKSSGGMVVKQDRNESSPYAAMQMAIQVAQNARDKGITGVHVKVRAPGRGKQRSPGPGAQAAIRALARAGMRIGRIEDVTPVPHDSIRGKGGRRGRRV.

The disordered stretch occupies residues 107–129; that stretch reads IEDVTPVPHDSIRGKGGRRGRRV.

This sequence belongs to the universal ribosomal protein uS11 family. As to quaternary structure, part of the 30S ribosomal subunit.

Its function is as follows. Located on the platform of the 30S subunit. This is Small ribosomal subunit protein uS11 from Methanoculleus marisnigri (strain ATCC 35101 / DSM 1498 / JR1).